Here is a 100-residue protein sequence, read N- to C-terminus: Putative protein adenylyltransferase MJ1379 (100 aa).

A GSX(10)DXD motif motif is present at residues 31–45 (GSYARGEQTEESDID). Mg(2+) is bound by residues aspartate 43, aspartate 45, and aspartate 77.

This sequence belongs to the MntA antitoxin family. As to quaternary structure, probably forms a complex with cognate toxin MJ1380. Requires Mg(2+) as cofactor.

It catalyses the reaction L-tyrosyl-[protein] + ATP = O-(5'-adenylyl)-L-tyrosyl-[protein] + diphosphate. It carries out the reaction O-(5'-adenylyl)-L-tyrosyl-[protein] + ATP = O-[5'-(adenylyl-(5'-&gt;3')-adenylyl)]-L-tyrosyl-[protein] + diphosphate. Its function is as follows. Probable antitoxin component of a putative type VII toxin-antitoxin (TA) system. Neutralizes cognate toxic MJ1380 by di-AMPylation. The sequence is that of Putative protein adenylyltransferase MJ1379 from Methanocaldococcus jannaschii (strain ATCC 43067 / DSM 2661 / JAL-1 / JCM 10045 / NBRC 100440) (Methanococcus jannaschii).